Consider the following 385-residue polypeptide: Urotensin-2 receptor (385 aa).

Residues 1-53 (MALSLESTSFPMLAVSRSTASELPGGFNVSHNSSWTGPTDPSSLQDLVATGVI) are Extracellular-facing. 2 N-linked (GlcNAc...) asparagine glycosylation sites follow: Asn28 and Asn32. Residues 54 to 76 (GAVLSTMGVVGVVGNVYTLVVMC) form a helical membrane-spanning segment. The Cytoplasmic segment spans residues 77–86 (RFLRASASMY). The chain crosses the membrane as a helical span at residues 87–112 (VYVVNLALADLLYLLSIPFIVATYVT). At 113 to 123 (KDWHFGDVGCR) the chain is on the extracellular side. Cys122 and Cys198 are oxidised to a cystine. Residues 124 to 145 (VLFSLDFLTMHASIFTLTIMSS) traverse the membrane as a helical segment. The Cytoplasmic portion of the chain corresponds to 146–166 (ERYAAVLRPLDTVQRSKGYRK). A helical transmembrane segment spans residues 167-185 (LLALGTWLLALLLTLPMML). Over 186-208 (AIRLVRRGSKSLCLPAWGPRAHR) the chain is Extracellular. A helical membrane pass occupies residues 209–231 (TYLTLLFGTSIVGPGLVIGLLYI). Topologically, residues 232–257 (RLARAYWLSQQASFKQTRRLPNPRVL) are cytoplasmic. Residues 258-283 (YLILGIVLLFWACFLPFWLWQLLAQY) traverse the membrane as a helical segment. Residues 284–298 (HQAMPLTPETARIIN) lie on the Extracellular side of the membrane. The chain crosses the membrane as a helical span at residues 299-320 (YLTACLTYGNSCINPFLYTLLT). Topologically, residues 321–385 (KNYREYLRGR…SPVPPNGAFV (65 aa)) are cytoplasmic.

The protein belongs to the G-protein coupled receptor 1 family.

It is found in the cell membrane. In terms of biological role, high affinity receptor for urotensin-2 and urotensin-2B. The activity of this receptor is mediated by a G-protein that activate a phosphatidylinositol-calcium second messenger system. The sequence is that of Urotensin-2 receptor (Uts2r) from Mus musculus (Mouse).